Consider the following 172-residue polypeptide: Stellate protein CG33237 (172 aa).

Belongs to the casein kinase 2 subunit beta family. Interacts in vitro with the casein kinase 2 alpha subunit (CkII-alpha). The relevance of such interaction is however unclear in vivo. As to expression, probably not expressed in wild-type flies. In males lacking the Y chromosome, it is testis-specific and constitutes the main component of star-shaped crystals.

Functionally, unknown. In males lacking the Y chromosome, its strong overexpression leads to the appearance of proteinaceous star-shaped crystals in the primary spermatocytes causing meiotic drive, possibly by interfering with normal casein kinase 2 activity. In Drosophila melanogaster (Fruit fly), this protein is Stellate protein CG33237 (Ste:CG33237).